Reading from the N-terminus, the 459-residue chain is Cysteine--tRNA ligase (459 aa).

Cysteine 28 is a binding site for Zn(2+). Positions 30–40 match the 'HIGH' region motif; it reads VTVYDLCHIGH. The Zn(2+) site is built by cysteine 209, histidine 234, and glutamate 238. Residues 266–270 carry the 'KMSKS' region motif; sequence KMSKS. ATP is bound at residue lysine 269.

The protein belongs to the class-I aminoacyl-tRNA synthetase family. Monomer. Zn(2+) is required as a cofactor.

The protein resides in the cytoplasm. It catalyses the reaction tRNA(Cys) + L-cysteine + ATP = L-cysteinyl-tRNA(Cys) + AMP + diphosphate. The sequence is that of Cysteine--tRNA ligase from Histophilus somni (strain 129Pt) (Haemophilus somnus).